Here is a 493-residue protein sequence, read N- to C-terminus: Glutathione hydrolase 6 (493 aa).

At 1–54 (MERAEEPVVYQKLLPWEPSLESEEEVEEEETSEALVLNPRRHQDSSRNKAGGLP) the chain is on the cytoplasmic side. The segment at 19 to 52 (SLESEEEVEEEETSEALVLNPRRHQDSSRNKAGG) is disordered. The segment covering 20–32 (LESEEEVEEEETS) has biased composition (acidic residues). The chain crosses the membrane as a helical; Signal-anchor for type II membrane protein span at residues 55 to 75 (GTWARVVAALLLLAVGCSLAV). Topologically, residues 76–493 (RQLQNQGRST…PHACCPFQGF (418 aa)) are extracellular. The disordered stretch occupies residues 83 to 105 (RSTGSLGSVAPPPGGHSHGPGVY). N-linked (GlcNAc...) asparagine glycosylation is found at Asn161 and Asn370. The span at 442 to 455 (PPTQAQHQHQGQQE) shows a compositional bias: low complexity. The disordered stretch occupies residues 442–464 (PPTQAQHQHQGQQEPTEHPSTCG).

This sequence belongs to the gamma-glutamyltransferase family. As to quaternary structure, heterodimer composed of the light and heavy chains. The active site is located in the light chain. Cleaved by autocatalysis into a large and a small subunit and the autocatalytic cleavage is essential to the functional activation of the enzyme.

The protein resides in the membrane. The enzyme catalyses an N-terminal (5-L-glutamyl)-[peptide] + an alpha-amino acid = 5-L-glutamyl amino acid + an N-terminal L-alpha-aminoacyl-[peptide]. It catalyses the reaction glutathione + H2O = L-cysteinylglycine + L-glutamate. It carries out the reaction an S-substituted glutathione + H2O = an S-substituted L-cysteinylglycine + L-glutamate. Its pathway is sulfur metabolism; glutathione metabolism. Functionally, hydrolyzes and transfers gamma-glutamyl moieties from glutathione and other gamma-glutamyl compounds to acceptors. In Homo sapiens (Human), this protein is Glutathione hydrolase 6.